The chain runs to 533 residues: MVHLAKYIVVTGGVVSSIGKGITAASIGRILRSYGLSVTAIKIDPYLNWDSGTLNPYQHGEVFVTDDGMETDLDLGHYERFLDSDLPGEANITTGKVYMSVINKERSGDYLGSCVQIIPHITDEIKSMIRKIADKSGAEVVLVEVGGTVGDIEGQPFLEALRQLRNEEGHENVMFVHVTYVPYLRAAGEFKTKPTQHSTKELRSTGINPDMIICRSEMPIDSSLKRKIAHFCDVEEEAVVNAPDASSIYEVPLVLDSERVGDYIVRRIELDVDGEADLSEWAGIVESLMIDEPVVTVGIVGKYVELEDSYISIREALKHAAAHLRVRVDIEWISADDAVNEEDLSRLDSILIPGGFGERGIAGKLEAVRFALENRVPIFGICLGMQCMVIEFARLNGMEGANSTEFDPETPYPVIDMMEEQKRIKNMGGTMRLGSYQCRIREGTLAHEAYGTELVGERHRHRFELNNEFREELESKGLIISGTSPDDFLVEMVEIKDHPWFLGCQFHPEFRSRPNRAHPLFVSFLRAALERSR.

Residues 1–270 (MVHLAKYIVV…GDYIVRRIEL (270 aa)) are amidoligase domain. Residue Ser-16 participates in CTP binding. Ser-16 serves as a coordination point for UTP. 17 to 22 (SIGKGI) serves as a coordination point for ATP. Tyr-57 lines the L-glutamine pocket. Asp-74 is an ATP binding site. Mg(2+) contacts are provided by Asp-74 and Glu-144. CTP-binding positions include 151-153 (DIE), 191-196 (KTKPTQ), and Lys-227. Residues 191–196 (KTKPTQ) and Lys-227 each bind UTP. Positions 303 to 533 (YVELEDSYIS…FLRAALERSR (231 aa)) constitute a Glutamine amidotransferase type-1 domain. Position 355 (Gly-355) interacts with L-glutamine. Residue Cys-382 is the Nucleophile; for glutamine hydrolysis of the active site. Residues 383-386 (LGMQ), Glu-405, and Arg-462 contribute to the L-glutamine site. Residues His-507 and Glu-509 contribute to the active site.

Belongs to the CTP synthase family. Homotetramer.

The catalysed reaction is UTP + L-glutamine + ATP + H2O = CTP + L-glutamate + ADP + phosphate + 2 H(+). It catalyses the reaction L-glutamine + H2O = L-glutamate + NH4(+). It carries out the reaction UTP + NH4(+) + ATP = CTP + ADP + phosphate + 2 H(+). The protein operates within pyrimidine metabolism; CTP biosynthesis via de novo pathway; CTP from UDP: step 2/2. Allosterically activated by GTP, when glutamine is the substrate; GTP has no effect on the reaction when ammonia is the substrate. The allosteric effector GTP functions by stabilizing the protein conformation that binds the tetrahedral intermediate(s) formed during glutamine hydrolysis. Inhibited by the product CTP, via allosteric rather than competitive inhibition. Its function is as follows. Catalyzes the ATP-dependent amination of UTP to CTP with either L-glutamine or ammonia as the source of nitrogen. Regulates intracellular CTP levels through interactions with the four ribonucleotide triphosphates. The protein is CTP synthase of Methanothermobacter thermautotrophicus (strain ATCC 29096 / DSM 1053 / JCM 10044 / NBRC 100330 / Delta H) (Methanobacterium thermoautotrophicum).